We begin with the raw amino-acid sequence, 159 residues long: Ribosomal RNA large subunit methyltransferase H (159 aa).

S-adenosyl-L-methionine contacts are provided by residues L76, G108, and 127–132 (FGKLTM).

This sequence belongs to the RNA methyltransferase RlmH family. In terms of assembly, homodimer.

Its subcellular location is the cytoplasm. It carries out the reaction pseudouridine(1915) in 23S rRNA + S-adenosyl-L-methionine = N(3)-methylpseudouridine(1915) in 23S rRNA + S-adenosyl-L-homocysteine + H(+). Functionally, specifically methylates the pseudouridine at position 1915 (m3Psi1915) in 23S rRNA. The polypeptide is Ribosomal RNA large subunit methyltransferase H (Lactobacillus delbrueckii subsp. bulgaricus (strain ATCC 11842 / DSM 20081 / BCRC 10696 / JCM 1002 / NBRC 13953 / NCIMB 11778 / NCTC 12712 / WDCM 00102 / Lb 14)).